Consider the following 368-residue polypeptide: 4-hydroxy-3-methylbut-2-en-1-yl diphosphate synthase (flavodoxin) (368 aa).

[4Fe-4S] cluster is bound by residues Cys268, Cys271, Cys303, and Glu310.

Belongs to the IspG family. The cofactor is [4Fe-4S] cluster.

It catalyses the reaction (2E)-4-hydroxy-3-methylbut-2-enyl diphosphate + oxidized [flavodoxin] + H2O + 2 H(+) = 2-C-methyl-D-erythritol 2,4-cyclic diphosphate + reduced [flavodoxin]. It participates in isoprenoid biosynthesis; isopentenyl diphosphate biosynthesis via DXP pathway; isopentenyl diphosphate from 1-deoxy-D-xylulose 5-phosphate: step 5/6. Converts 2C-methyl-D-erythritol 2,4-cyclodiphosphate (ME-2,4cPP) into 1-hydroxy-2-methyl-2-(E)-butenyl 4-diphosphate. The sequence is that of 4-hydroxy-3-methylbut-2-en-1-yl diphosphate synthase (flavodoxin) from Bacillus cytotoxicus (strain DSM 22905 / CIP 110041 / 391-98 / NVH 391-98).